The chain runs to 876 residues: MAP7 domain-containing protein 3 (876 aa).

Disordered stretches follow at residues 30–139, 162–200, and 402–438; these read AEER…KFKA, GGVMNADKSGKLENKRSSSLSRKDNRLHPRGDMQHVDNT, and TEAPLQARGESRLEASVEGQPEANVEGSPKNPEIDKR. Over residues 39-54 the composition is skewed to polar residues; sequence INSSAGANKRSSSTPD. Residues 58-136 adopt a coiled-coil conformation; sequence LKNDVKQQLA…KQKQAEDTEK (79 aa). 2 stretches are compositionally biased toward basic and acidic residues: residues 60-139 and 169-196; these read NDVK…KFKA and KSGKLENKRSSSLSRKDNRLHPRGDMQH. Residues S417 and S483 each carry the phosphoserine modification. Coiled coils occupy residues 549-578 and 626-658; these read IQIRHAAYEQSKNEKERLQKEETKQRIARK and SAMMKSRDSAEQRKKEQENILQHWQERLERRKA. Disordered stretches follow at residues 558 to 683 and 742 to 783; these read QSKN…EIFP and IQGK…NPNH. 2 stretches are compositionally biased toward basic and acidic residues: residues 559-590 and 630-659; these read SKNEKERLQKEETKQRIARKPEIMAEKLDKVP and KSRDSAEQRKKEQENILQHWQERLERRKAS. Acidic residues predominate over residues 665–679; sequence SEDEADDEGESEDSL. Residues 750–763 show a composition bias toward basic residues; sequence SAKKPPTRPIRSRK. A compositionally biased stretch (polar residues) spans 771 to 782; the sequence is IRPTQSASSNPN.

The protein belongs to the MAP7 family. In terms of tissue distribution, high expression in lung, skeletal muscle, brain, and kidney, with much weaker expression in spleen, small intestine, liver, and heart.

The protein localises to the cytoplasm. It is found in the cytoskeleton. It localises to the spindle. In terms of biological role, promotes the assembly and stability of microtubules. This Mus musculus (Mouse) protein is MAP7 domain-containing protein 3 (Map7d3).